The chain runs to 142 residues: Large ribosomal subunit protein uL13 (142 aa).

This sequence belongs to the universal ribosomal protein uL13 family. Part of the 50S ribosomal subunit.

In terms of biological role, this protein is one of the early assembly proteins of the 50S ribosomal subunit, although it is not seen to bind rRNA by itself. It is important during the early stages of 50S assembly. This is Large ribosomal subunit protein uL13 from Alkalilimnicola ehrlichii (strain ATCC BAA-1101 / DSM 17681 / MLHE-1).